The following is a 179-amino-acid chain: Adenylyl-sulfate kinase (179 aa).

13–20 (GLSGAGKS) contacts ATP. The active-site Phosphoserine intermediate is Ser-87.

It belongs to the APS kinase family.

The enzyme catalyses adenosine 5'-phosphosulfate + ATP = 3'-phosphoadenylyl sulfate + ADP + H(+). The protein operates within sulfur metabolism; hydrogen sulfide biosynthesis; sulfite from sulfate: step 2/3. Catalyzes the synthesis of activated sulfate. The chain is Adenylyl-sulfate kinase from Paraburkholderia xenovorans (strain LB400).